A 246-amino-acid polypeptide reads, in one-letter code: Octanoyltransferase (246 aa).

Residues 46–234 enclose the BPL/LPL catalytic domain; sequence GTAGEMVWLV…AFEEVFGAAE (189 aa). Substrate-binding positions include 85–92, 165–167, and 178–180; these read RGGEYTYH, AIG, and GIA. Cys-196 functions as the Acyl-thioester intermediate in the catalytic mechanism.

Belongs to the LipB family.

Its subcellular location is the cytoplasm. The enzyme catalyses octanoyl-[ACP] + L-lysyl-[protein] = N(6)-octanoyl-L-lysyl-[protein] + holo-[ACP] + H(+). It functions in the pathway protein modification; protein lipoylation via endogenous pathway; protein N(6)-(lipoyl)lysine from octanoyl-[acyl-carrier-protein]: step 1/2. In terms of biological role, catalyzes the transfer of endogenously produced octanoic acid from octanoyl-acyl-carrier-protein onto the lipoyl domains of lipoate-dependent enzymes. Lipoyl-ACP can also act as a substrate although octanoyl-ACP is likely to be the physiological substrate. The chain is Octanoyltransferase from Chelativorans sp. (strain BNC1).